The sequence spans 307 residues: ATP synthase gamma chain (307 aa).

Belongs to the ATPase gamma chain family. In terms of assembly, F-type ATPases have 2 components, CF(1) - the catalytic core - and CF(0) - the membrane proton channel. CF(1) has five subunits: alpha(3), beta(3), gamma(1), delta(1), epsilon(1). CF(0) has three main subunits: a, b and c.

Its subcellular location is the cell membrane. Produces ATP from ADP in the presence of a proton gradient across the membrane. The gamma chain is believed to be important in regulating ATPase activity and the flow of protons through the CF(0) complex. In Bifidobacterium longum subsp. infantis (strain ATCC 15697 / DSM 20088 / JCM 1222 / NCTC 11817 / S12), this protein is ATP synthase gamma chain.